Here is a 285-residue protein sequence, read N- to C-terminus: Acetylglutamate kinase (285 aa).

Substrate contacts are provided by residues 69–70 (GG), arginine 91, and asparagine 183.

The protein belongs to the acetylglutamate kinase family. ArgB subfamily.

The protein resides in the cytoplasm. It carries out the reaction N-acetyl-L-glutamate + ATP = N-acetyl-L-glutamyl 5-phosphate + ADP. The protein operates within amino-acid biosynthesis; L-arginine biosynthesis; N(2)-acetyl-L-ornithine from L-glutamate: step 2/4. In terms of biological role, catalyzes the ATP-dependent phosphorylation of N-acetyl-L-glutamate. The chain is Acetylglutamate kinase from Jannaschia sp. (strain CCS1).